The chain runs to 92 residues: Small ribosomal subunit protein uS19 (92 aa).

It belongs to the universal ribosomal protein uS19 family.

Functionally, protein S19 forms a complex with S13 that binds strongly to the 16S ribosomal RNA. In Dinoroseobacter shibae (strain DSM 16493 / NCIMB 14021 / DFL 12), this protein is Small ribosomal subunit protein uS19.